The primary structure comprises 131 residues: Small ribosomal subunit protein uS8 (131 aa).

Belongs to the universal ribosomal protein uS8 family. As to quaternary structure, part of the 30S ribosomal subunit. Contacts proteins S5 and S12.

Functionally, one of the primary rRNA binding proteins, it binds directly to 16S rRNA central domain where it helps coordinate assembly of the platform of the 30S subunit. In Burkholderia ambifaria (strain MC40-6), this protein is Small ribosomal subunit protein uS8.